The primary structure comprises 295 residues: Trimeric intracellular cation channel type A (295 aa).

At 1–11 (MELLSALSLDD) the chain is on the lumenal side. Residues 12-32 (LAVAFSKLPVFPLFDVAYYII) traverse the membrane as a helical segment. Residues 33-51 (SILYLKYEPGAVDLSKRSP) lie on the Cytoplasmic side of the membrane. Residues 52–72 (VASWLCAMLYCFGSYILADVL) traverse the membrane as a helical segment. Residues 73 to 84 (LGESPIHYFSNN) are Lumenal-facing. Gly-74 is a Ca(2+) binding site. A helical transmembrane segment spans residues 85 to 105 (ANILLASAVWYLTFFCPLNIF). Topologically, residues 106 to 144 (YKIVSFLPLKLVLVGMKEVVRVRKIAMGIHHAHHHYHHG) are cytoplasmic. 2 residues coordinate a 1,2-diacyl-sn-glycero-3-phospho-(1D-myo-inositol-4,5-bisphosphate): Lys-122 and Arg-126. A helical transmembrane segment spans residues 145–165 (WVIMVLIGWVKGSGVALMSNL). The Lumenal portion of the chain corresponds to 166-178 (EQLLRGVWKPETN). The helical transmembrane segment at 179-199 (EILHMSFPTKASLYGAILFTL) threads the bilayer. Residues 200 to 201 (QQ) lie on the Cytoplasmic side of the membrane. A helical transmembrane segment spans residues 202-222 (AHWLPISKAYLIFFFTLFMAI). At 223 to 233 (CKIYMTATHSH) the chain is on the lumenal side. The chain crosses the membrane as a helical span at residues 234 to 254 (GSPFAIFESGICCVLFGAANG). Over 255 to 295 (DHDDHGDHHHHHDDHDVSHSTVKSKEELNEGTRKRKTKKAE) the chain is Cytoplasmic. A compositionally biased stretch (basic and acidic residues) spans 259–286 (HGDHHHHHDDHDVSHSTVKSKEELNEGT). The interval 259 to 295 (HGDHHHHHDDHDVSHSTVKSKEELNEGTRKRKTKKAE) is disordered.

This sequence belongs to the TMEM38 family. Homotrimer; conformation seems to be controled by binding to diacylglycerol (DAG).

The protein resides in the sarcoplasmic reticulum membrane. It is found in the nucleus membrane. The catalysed reaction is K(+)(in) = K(+)(out). With respect to regulation, channel activity is activated by a change of voltage within the sarcoplasmic reticulum lumen and blocked by luminal high Ca(2+) levels. Intracellular monovalent cation channel required for maintenance of rapid intracellular calcium release. Acts as a potassium counter-ion channel that functions in synchronization with calcium release from intracellular stores. Opened by a change of voltage within the sarcoplasmic reticulum lumen. This Xenopus tropicalis (Western clawed frog) protein is Trimeric intracellular cation channel type A (tmem38a).